The following is a 595-amino-acid chain: Beta-(1--&gt;2)glucan export ATP-binding/permease protein NdvA (595 aa).

The ABC transmembrane type-1 domain occupies 21–301 (SLLICSANVM…MSNFINLTIS (281 aa)). The next 5 helical transmembrane spans lie at 22 to 42 (LLIC…PILF), 55 to 75 (IIPT…AYVL), 129 to 149 (IWLD…VLIP), 152 to 172 (FNMN…YVLI), and 248 to 268 (MAST…VAKG). Positions 335–569 (IQFHHVTYKF…GGRFYKLLKA (235 aa)) constitute an ABC transporter domain. Position 368 to 375 (368 to 375 (GPTGAGKT)) interacts with ATP.

It belongs to the ABC transporter superfamily. Beta-(1--&gt;2)glucan exporter (TC 3.A.1.108.1) family. As to quaternary structure, homodimer.

Its subcellular location is the cell inner membrane. It catalyses the reaction [(1-&gt;2)-beta-D-glucosyl](n)(in) + ATP + H2O = [(1-&gt;2)-beta-D-glucosyl](n)(out) + ADP + phosphate + H(+). In terms of biological role, involved in beta-(1--&gt;2)glucan export. Transmembrane domains (TMD) form a pore in the inner membrane and the ATP-binding domain (NBD) is responsible for energy generation. The sequence is that of Beta-(1--&gt;2)glucan export ATP-binding/permease protein NdvA from Bartonella henselae (strain ATCC 49882 / DSM 28221 / CCUG 30454 / Houston 1) (Rochalimaea henselae).